The chain runs to 429 residues: C4-dicarboxylate transport protein (429 aa).

8 helical membrane passes run V9–P29, L45–M65, L79–I99, G149–G169, V185–M205, L223–A243, I308–M328, and A356–I376.

Belongs to the dicarboxylate/amino acid:cation symporter (DAACS) (TC 2.A.23) family.

The protein localises to the cell inner membrane. Responsible for the transport of dicarboxylates such as succinate, fumarate, and malate from the periplasm across the membrane. The sequence is that of C4-dicarboxylate transport protein from Burkholderia ambifaria (strain MC40-6).